Here is a 453-residue protein sequence, read N- to C-terminus: Cytochrome P450 monooxygenase PC-20 (453 aa).

Helical transmembrane passes span Leu-5 to Ile-25 and Leu-49 to Val-69. Cys-387 contributes to the heme binding site.

Belongs to the cytochrome P450 family. Heme is required as a cofactor.

It is found in the membrane. The protein operates within secondary metabolite biosynthesis. Functionally, cytochrome P450 monooxygenase; part of the gene cluster that mediates the biosynthesis of the indole diterpenes penitrems. The geranylgeranyl diphosphate (GGPP) synthase penG catalyzes the first step in penitrem biosynthesis via conversion of farnesyl pyrophosphate and isopentyl pyrophosphate into geranylgeranyl pyrophosphate (GGPP). Condensation of indole-3-glycerol phosphate with GGPP by the prenyl transferase penC then forms 3-geranylgeranylindole (3-GGI). Epoxidation by the FAD-dependent monooxygenase penM leads to a epoxidized-GGI that is substrate of the terpene cyclase penB for cyclization to yield paspaline. Paspaline is subsequently converted to 13-desoxypaxilline by the cytochrome P450 monooxygenase penP, the latter being then converted to paxilline by the cytochrome P450 monooxygenase penQ. Paxilline is converted to beta-paxitriol via C-10 ketoreduction by the short-chain dehydrogenase PC-15 which can be monoprenylated at the C-20 by the indole diterpene prenyltransferase penD. A two-step elimination (acetylation and elimination) process performed by the O-acetyltransferase PC-16 and the P.simplicissimum ptmI-ortholog not yet identified in P.crustosum, leads to the production of the prenylated form of penijanthine. The FAD-linked oxidoreductase ptmO then converts the prenylated form of penijanthine into PC-M5 which is in turn transformed into PC-M4 by the aromatic dimethylallyltransferase PC-22. A series of oxidation steps involving 4 cytochrome P450 monooxygenases (PC-21, PC-05, PC-23, PC-20) and a FAD-dependent monooxygenase (PC-14) are required for the transformation of PC-M4 to penitrems A and E. Synthesis of these final products is proposed to proceed via penitrems D and C (PC-21, PC-05, PC-14) and penitrems B and F (PC-21, PC-05, PC-14, PC-23). This chain is Cytochrome P450 monooxygenase PC-20, found in Penicillium crustosum (Blue mold fungus).